The primary structure comprises 1040 residues: V(D)J recombination-activating protein 1 (1040 aa).

Residues 39–53 (EKAPEEAQKEKDSSE) show a composition bias toward basic and acidic residues. Positions 39–71 (EKAPEEAQKEKDSSEGKPYLEQSPVVPEKPGGQ) are disordered. Residue lysine 233 forms a Glycyl lysine isopeptide (Lys-Gly) (interchain with G-Cter in ubiquitin) linkage. Zn(2+) contacts are provided by cysteine 266, histidine 270, cysteine 290, cysteine 293, histidine 295, cysteine 305, histidine 307, cysteine 310, cysteine 313, cysteine 325, cysteine 328, cysteine 355, cysteine 360, histidine 372, and histidine 376. The RING-type zinc-finger motif lies at 290–329 (CQICEHILADPVETSCKHLFCRICILRCLKVMGSYCPSCR). Residues 351–380 (LMVKCPAQDCNEEVSLEKYNHHVSSHKESK) form an RAG1-type zinc finger. Residues 389 to 456 (GGRPRQHLLS…QADELEAIMQ (68 aa)) constitute a DNA-binding region (NBD). Residues aspartate 600, aspartate 708, and glutamate 962 each coordinate a divalent metal cation.

This sequence belongs to the RAG1 family. In terms of assembly, homodimer. Component of the RAG complex composed of core components RAG1 and RAG2, and associated component HMGB1 or HMGB2. Interacts with DCAF1, leading to recruitment of the CUL4A-RBX1-DDB1-DCAF1/VPRBP complex to ubiquitinate proteins and limit error-prone repair during V(D)J recombination. Requires Mg(2+) as cofactor. Mn(2+) is required as a cofactor. Autoubiquitinated in the presence of CDC34/UBCH3. Maturing lymphoid cells and central nervous system.

Its subcellular location is the nucleus. It catalyses the reaction S-ubiquitinyl-[E2 ubiquitin-conjugating enzyme]-L-cysteine + [acceptor protein]-L-lysine = [E2 ubiquitin-conjugating enzyme]-L-cysteine + N(6)-ubiquitinyl-[acceptor protein]-L-lysine.. In terms of biological role, catalytic component of the RAG complex, a multiprotein complex that mediates the DNA cleavage phase during V(D)J recombination. V(D)J recombination assembles a diverse repertoire of immunoglobulin and T-cell receptor genes in developing B and T-lymphocytes through rearrangement of different V (variable), in some cases D (diversity), and J (joining) gene segments. In the RAG complex, RAG1 mediates the DNA-binding to the conserved recombination signal sequences (RSS) and catalyzes the DNA cleavage activities by introducing a double-strand break between the RSS and the adjacent coding segment. RAG2 is not a catalytic component but is required for all known catalytic activities. DNA cleavage occurs in 2 steps: a first nick is introduced in the top strand immediately upstream of the heptamer, generating a 3'-hydroxyl group that can attack the phosphodiester bond on the opposite strand in a direct transesterification reaction, thereby creating 4 DNA ends: 2 hairpin coding ends and 2 blunt, 5'-phosphorylated ends. The chromatin structure plays an essential role in the V(D)J recombination reactions and the presence of histone H3 trimethylated at 'Lys-4' (H3K4me3) stimulates both the nicking and haipinning steps. The RAG complex also plays a role in pre-B cell allelic exclusion, a process leading to expression of a single immunoglobulin heavy chain allele to enforce clonality and monospecific recognition by the B-cell antigen receptor (BCR) expressed on individual B-lymphocytes. The introduction of DNA breaks by the RAG complex on one immunoglobulin allele induces ATM-dependent repositioning of the other allele to pericentromeric heterochromatin, preventing accessibility to the RAG complex and recombination of the second allele. In addition to its endonuclease activity, RAG1 also acts as an E3 ubiquitin-protein ligase that mediates monoubiquitination of histone H3. Histone H3 monoubiquitination is required for the joining step of V(D)J recombination. Mediates polyubiquitination of KPNA1. This chain is V(D)J recombination-activating protein 1 (Rag1), found in Mus musculus (Mouse).